The primary structure comprises 78 residues: uncharacterized protein (78 aa).

The next 2 membrane-spanning stretches (helical) occupy residues 25-45 and 50-70; these read IITA…DEVV and KCAD…FVFV.

It is found in the membrane. This is an uncharacterized protein from Saccharomyces cerevisiae (strain ATCC 204508 / S288c) (Baker's yeast).